The following is a 741-amino-acid chain: uncharacterized protein (741 aa).

An N-terminal signal peptide occupies residues 1 to 22 (MKSVKIIIILALALLIQISHIA).

This is an uncharacterized protein from Archaeoglobus fulgidus (strain ATCC 49558 / DSM 4304 / JCM 9628 / NBRC 100126 / VC-16).